The following is a 60-amino-acid chain: Beta-defensin 8 (60 aa).

A signal peptide spans 1 to 22; that stretch reads MRIHYLLFTFLLVLLSPLAAFS. Residues 23–25 constitute a propeptide that is removed on maturation; that stretch reads QKI. 3 cysteine pairs are disulfide-bonded: Cys-31-Cys-58, Cys-38-Cys-52, and Cys-42-Cys-59.

The protein belongs to the beta-defensin family. In terms of tissue distribution, most highly expressed in testis and heart.

Its subcellular location is the secreted. A synthetic peptide displays antimicrobial activities against S.aureus, P.aeruginosa, E.coli and B.cepacia. The antimicrobial activity against S.aureus, E.coli and B.cepacia is reduced in raised concentration of NaCl, but its action against P.aeruginosa is independent of NaCl concentration. This is Beta-defensin 8 (Defb8) from Mus musculus (Mouse).